The primary structure comprises 294 residues: NAD kinase (294 aa).

The active-site Proton acceptor is the aspartate 74. NAD(+) contacts are provided by residues 74–75 (DG), 148–149 (NE), histidine 159, arginine 176, aspartate 178, 189–194 (TAYSLS), and glutamine 249.

This sequence belongs to the NAD kinase family. A divalent metal cation is required as a cofactor.

It is found in the cytoplasm. The catalysed reaction is NAD(+) + ATP = ADP + NADP(+) + H(+). In terms of biological role, involved in the regulation of the intracellular balance of NAD and NADP, and is a key enzyme in the biosynthesis of NADP. Catalyzes specifically the phosphorylation on 2'-hydroxyl of the adenosine moiety of NAD to yield NADP. The chain is NAD kinase from Vibrio parahaemolyticus serotype O3:K6 (strain RIMD 2210633).